The following is a 295-amino-acid chain: uncharacterized protein (295 aa).

The N-terminal stretch at 1–19 (MHKLLLIITVFFTFNVAQA) is a signal peptide.

This is an uncharacterized protein from Rickettsia prowazekii (strain Madrid E).